Consider the following 879-residue polypeptide: Protein P (879 aa).

The terminal protein domain (TP) stretch occupies residues 1 to 184 (MHPFSRLFRN…GKPYSWEHRQ (184 aa)). The segment at 185-382 (LVQHNGQQHK…YCIHHIVSSI (198 aa)) is spacer. The segment at 304-345 (SASNSNKSRSREKAYSSNSTSKRYSPPLNYEKSDFSSPGVRG) is disordered. The segment at 383 to 724 (DDWGPCTVTG…YEELWPVVRQ (342 aa)) is polymerase/reverse transcriptase domain (RT). In terms of domain architecture, Reverse transcriptase spans 393-634 (DVTIKSPRTP…NHLHFMGYVI (242 aa)). 3 residues coordinate Mg(2+): aspartate 465, aspartate 585, and aspartate 586.

It belongs to the hepadnaviridae P protein family.

It catalyses the reaction DNA(n) + a 2'-deoxyribonucleoside 5'-triphosphate = DNA(n+1) + diphosphate. The catalysed reaction is Endonucleolytic cleavage to 5'-phosphomonoester.. Activated by host HSP70 and HSP40 in vitro to be able to bind the epsilon loop of the pgRNA. Because deletion of the RNase H region renders the protein partly chaperone-independent, the chaperones may be needed indirectly to relieve occlusion of the RNA-binding site by this domain. Inhibited by several reverse-transcriptase inhibitors: Lamivudine, Adefovir and Entecavir. Functionally, multifunctional enzyme that converts the viral RNA genome into dsDNA in viral cytoplasmic capsids. This enzyme displays a DNA polymerase activity that can copy either DNA or RNA templates, and a ribonuclease H (RNase H) activity that cleaves the RNA strand of RNA-DNA heteroduplexes in a partially processive 3'- to 5'-endonucleasic mode. Neo-synthesized pregenomic RNA (pgRNA) are encapsidated together with the P protein, and reverse-transcribed inside the nucleocapsid. Initiation of reverse-transcription occurs first by binding the epsilon loop on the pgRNA genome, and is initiated by protein priming, thereby the 5'-end of (-)DNA is covalently linked to P protein. Partial (+)DNA is synthesized from the (-)DNA template and generates the relaxed circular DNA (RC-DNA) genome. After budding and infection, the RC-DNA migrates in the nucleus, and is converted into a plasmid-like covalently closed circular DNA (cccDNA). The activity of P protein does not seem to be necessary for cccDNA generation, and is presumably released from (+)DNA by host nuclear DNA repair machinery. In Woodchuck hepatitis B virus (isolate 1) (WHV), this protein is Protein P.